A 474-amino-acid chain; its full sequence is Histone H2B.v2 (474 aa).

3 disordered regions span residues 99–123, 276–295, and 328–394; these read FNNG…QNEL, TTFT…ISGD, and FNDN…VNNN. Low complexity-rich tracts occupy residues 100 to 110, 276 to 286, and 329 to 368; these read NNGGNNNNNNE, TTFTQQEQQEQ, and NDNN…NNKN.

This sequence belongs to the histone H2B family.

The sequence is that of Histone H2B.v2 (H2Bv2) from Dictyostelium discoideum (Social amoeba).